We begin with the raw amino-acid sequence, 1733 residues long: MGQTVTTPLSLTLQHWGDVQRIASNQSVDVKKRRWVTFCSAEWPTFNVGWPQDGTFNLGVISQVKSRVFCPGPHGHPDQVPYIVTWEALAYDPPPWVKPFVSPKPPPLPTAPVLPPGPSAQPPSRSALYPALTLSIKSKPPKPQVLPDSGGPLIDLLTEDPPPYGVQPSSSARENNEEEAATTSEVSPPSPMVSRLRGRRDPPAADSTTSQAFPLRMGGDGQLQYWPFSSSDLYNWKNNNPSFSEDPGKLTALIESVLITHQPTWDDCQQLLGTLLTGEEKQRVLLEAGKAVRGNDGRPTQLPNEVNAAFPLERPDWDYTTTEGRNHLVLYRQLLLAGLQNAGRSPTNLAKVKGITQGPNESPSAFLERLKEAYRRYTPYDPEDPGQETNVSMSFIWQSAPDIGRKLERLEDLKSKTLGDLVREAEKIFNKRETPEEREERIRREIEEKEERRRAEDEQRERERDRRRHREMSKLLATVVIGQRQDRQGGERRRPQLDKDQCAYCKEKGHWAKDCPKKPRGPRGPRPQTSLLTLGDXGGQGQEPPPEPRITLKVGGQPVTFLVDTGAQHSVLTQNPGPLSDKSAWVQGATGGKRYRWTTDRKVHLATGKVTHSFLHVPDCPYPLLGRDLLTKLKAQIHFEGSGAQVVGPMGQPLQVLTLNIENKYRLHETSKEPDVPLGSTWLSDFPQAWAETGGMGLAVRQAPLIIPLKATSTPVSIKQYPMSQEARLGIKPHIQRLLDQGILVPCQSPWNTPLLPVKKPGTNDYRPVQDLREVNKRVEDIHPTVPNPYNLLSGLPPSHQWYTVLDLKDAFFCLRLHPTSQPLFAFEWRDPEMGISGQLTWTRLPQGFKNSPTLFDEALHRDLADFRIQHPDLILLQYVDDLLLAATSEQDCQRGTRALLQTLGNLGYRASAKKAQICQKQVKYLGYLLKEGQRWLTEARKETVMGQPTPKTPRQLREFLGTAGFCRLWIPGFAEMAAPLYPLTKTGTLFNWGPDQQKAYQEIKQALLTAPALGLPDLTKPFELFVDEKQGYAKGVLTQKLGPWRRPVAYLSKKLDPVAAGWPPCLRMVAAIAVLTKDAGKLTMGQPLVILAPHAVEALVKQPPDRWLSNARMTHYQAMLLDTDRVQFGPVVALNPATLLPLPEKEAPHDCLEILAETHGTRPDLTDQPIPDADYTWYTDGSSFLQEGQRRAGAAVTTETEVIWARALPAGTSAQRAELIALTQALKMAEGKKLNVYTDSRYAFATAHVHGEIYRRRGLLTSEGREIKNKNEILALLKALFLPKRLSIIHCPGHQKGNSAEARGNRMADQAAREAAMKAVLETSTLLIEDSTPYTPPHFHYTETDLKRLRELGATYNQTKGYWVLQGKPVMPDQSVFELLDSLHRLTHPSPQKMKALLDREESPYYMLNRDRTIQYVTETCTACAQVNASKAKIGAGVRVRGHRPGTHWEVDFTEVKPGLYGYKYLLVFVDTFSGWVEAFPTKRETAKVVTKKLLEDIFPRFGMPQVLGSDNGPAFASQVSQSVADLLGIDWKLHCAYRPQSSGQVERMNRTIKETLTKLTLASGTRDWVLLLPLALYRARNTPGPHGLTPYEILYGAPPPLVNFHDPEMSKLTNSPSLQAHLQALQAVQQEVWKPLAAAYQDQLDQPVIPHPFRVGDAVWVRRHQTKNLEPRWKGPYTVLLTTPTALKVDGISAWIHAAHVKAATTPPAGTAWKVQRSQNPLKIRLTRGAP.

G2 carries the N-myristoyl glycine; by host lipid modification. A PTAP/PSAP motif motif is present at residues 109–112 (PTAP). Residues 128 to 132 (LYPAL) carry the LYPX(n)L motif motif. Disordered stretches follow at residues 139 to 218 (KPPK…LRMG), 449 to 497 (KEER…RPQL), and 511 to 549 (WAKD…PEPR). A PPXY motif motif is present at residues 161–164 (PPPY). A Phosphoserine; by host modification is found at S190. Residues 436-476 (EEREERIRREIEEKEERRRAEDEQRERERDRRRHREMSKLL) adopt a coiled-coil conformation. Basic and acidic residues-rich tracts occupy residues 449 to 464 (KEER…ERER) and 484 to 497 (RQDR…RPQL). The segment at 500-517 (DQCAYCKEKGHWAKDCPK) adopts a CCHC-type zinc-finger fold. Residues 526–535 (RPQTSLLTLG) are compositionally biased toward low complexity. Positions 559–629 (VTFLVDTGAQ…CPYPLLGRDL (71 aa)) constitute a Peptidase A2 domain. Catalysis depends on D564, which acts as the Protease; shared with dimeric partner. RNA is bound by residues Y721, D771, R773, and P787. A Reverse transcriptase domain is found at 739-930 (LDQGILVPCQ…KQVKYLGYLL (192 aa)). D807 contributes to the Mg(2+) binding site. Positions 851 and 853 each coordinate RNA. Mg(2+)-binding residues include D881 and D882. Positions 941, 955, 958, and 966 each coordinate DNA. Positions 1054 and 1055 each coordinate RNA. Position 1063 (W1063) interacts with DNA. Residue K1082 coordinates RNA. Position 1113 (R1113) interacts with DNA. Positions 1172-1318 (PDADYTWYTD…ADQAAREAAM (147 aa)) constitute an RNase H type-1 domain. D1181 is a binding site for Mg(2+). Residues S1184 and L1186 each coordinate RNA. Q1187, S1214, and Q1216 together coordinate DNA. The Mg(2+) site is built by E1219 and D1240. Residues R1242 and R1266 each contribute to the RNA site. Mg(2+) is bound by residues D1310, D1453, and D1512. Positions 1442 to 1600 (RGHRPGTHWE…TPYEILYGAP (159 aa)) constitute an Integrase catalytic domain.

As to quaternary structure, homohexamer, that further associates as homomultimer. The virus core is composed of a lattice formed from hexagonal rings, each containing six capsid monomers. The protease is a homodimer, whose active site consists of two apposed aspartic acid residues. The reverse transcriptase is a monomer. Interacts (via PPXY motif) with host NEDD4. Interacts (via PSAP motif) with host TSG101. Interacts (via LYPX(n)L motif) with host PDCD6IP. In terms of assembly, the reverse transcriptase is a monomer (Potential). Interacts (via RNase domains) with host release factor ETF1; this interaction is essential for translational readthrough of amber codon between viral gag and pol genes, as well as for viral replication. As to quaternary structure, homodimer. The cofactor is Mg(2+). It depends on Mn(2+) as a cofactor. Specific enzymatic cleavages by the viral protease yield mature proteins. The protease is released by autocatalytic cleavage. The polyprotein is cleaved during and after budding, this process is termed maturation. Post-translationally, sumoylated; which is required for virus replication. In terms of processing, phosphorylated on serine residues.

It is found in the host cell membrane. It localises to the virion. It carries out the reaction DNA(n) + a 2'-deoxyribonucleoside 5'-triphosphate = DNA(n+1) + diphosphate. The catalysed reaction is Endonucleolytic cleavage to 5'-phosphomonoester.. Functionally, plays a role in budding and is processed by the viral protease during virion maturation outside the cell. During budding, it recruits, in a PPXY-dependent or independent manner, Nedd4-like ubiquitin ligases that conjugate ubiquitin molecules to Gag, or to Gag binding host factors. Interaction with HECT ubiquitin ligases probably link the viral protein to the host ESCRT pathway and facilitate release. In terms of biological role, targets Gag and gag-pol polyproteins to the plasma membrane via a multipartite membrane binding signal, that includes its myristoylated N-terminus. Also mediates nuclear localization of the pre-integration complex. Its function is as follows. Forms the spherical core of the virion that encapsulates the genomic RNA-nucleocapsid complex. Involved in the packaging and encapsidation of two copies of the genome. Binds with high affinity to conserved UCUG elements within the packaging signal, located near the 5'-end of the genome. This binding is dependent on genome dimerization. Acts as a nucleic acid chaperone which is involved in rearrangement of nucleic acid secondary structures during gRNA retrotranscription. Functionally, the aspartyl protease mediates proteolytic cleavages of Gag and Gag-Pol polyproteins during or shortly after the release of the virion from the plasma membrane. Cleavages take place as an ordered, step-wise cascade to yield mature proteins. This process is called maturation. Displays maximal activity during the budding process just prior to particle release from the cell. In terms of biological role, RT is a multifunctional enzyme that converts the viral dimeric RNA genome into dsDNA in the cytoplasm, shortly after virus entry into the cell. This enzyme displays a DNA polymerase activity that can copy either DNA or RNA templates, and a ribonuclease H (RNase H) activity that cleaves the RNA strand of RNA-DNA heteroduplexes in a partially processive 3' to 5' endonucleasic mode. Conversion of viral genomic RNA into dsDNA requires many steps. A tRNA binds to the primer-binding site (PBS) situated at the 5' end of the viral RNA. RT uses the 3' end of the tRNA primer to perform a short round of RNA-dependent minus-strand DNA synthesis. The reading proceeds through the U5 region and ends after the repeated (R) region which is present at both ends of viral RNA. The portion of the RNA-DNA heteroduplex is digested by the RNase H, resulting in a ssDNA product attached to the tRNA primer. This ssDNA/tRNA hybridizes with the identical R region situated at the 3' end of viral RNA. This template exchange, known as minus-strand DNA strong stop transfer, can be either intra- or intermolecular. RT uses the 3' end of this newly synthesized short ssDNA to perform the RNA-dependent minus-strand DNA synthesis of the whole template. RNase H digests the RNA template except for a polypurine tract (PPT) situated at the 5' end of the genome. It is not clear if both polymerase and RNase H activities are simultaneous. RNase H probably can proceed both in a polymerase-dependent (RNA cut into small fragments by the same RT performing DNA synthesis) and a polymerase-independent mode (cleavage of remaining RNA fragments by free RTs). Secondly, RT performs DNA-directed plus-strand DNA synthesis using the PPT that has not been removed by RNase H as primers. PPT and tRNA primers are then removed by RNase H. The 3' and 5' ssDNA PBS regions hybridize to form a circular dsDNA intermediate. Strand displacement synthesis by RT to the PBS and PPT ends produces a blunt ended, linear dsDNA copy of the viral genome that includes long terminal repeats (LTRs) at both ends. Its function is as follows. Catalyzes viral DNA integration into the host chromosome, by performing a series of DNA cutting and joining reactions. This enzyme activity takes place after virion entry into a cell and reverse transcription of the RNA genome in dsDNA. The first step in the integration process is 3' processing. This step requires a complex comprising the viral genome, matrix protein and integrase. This complex is called the pre-integration complex (PIC). The integrase protein removes 2 nucleotides from each 3' end of the viral DNA, leaving recessed CA OH's at the 3' ends. In the second step that requires cell division, the PIC enters cell nucleus. In the third step, termed strand transfer, the integrase protein joins the previously processed 3' ends to the 5' ends of strands of target cellular DNA at the site of integration. The last step is viral DNA integration into host chromosome. This is Gag-Pol polyprotein (gag-pol) from Homo sapiens (Human).